The chain runs to 574 residues: Interleukin-22 receptor subunit alpha-1 (574 aa).

An N-terminal signal peptide occupies residues 1-15 (MRTLLTILTVGSLAA). At 16 to 228 (HAPEDPSDLL…VKTLPDRTWT (213 aa)) the chain is on the extracellular side. Fibronectin type-III domains are found at residues 17-124 (APED…LKPP) and 141-221 (PTPT…RVKT). Cys-71 and Cys-79 are disulfide-bonded. N-linked (GlcNAc...) asparagine glycans are attached at residues Asn-80 and Asn-172. Residues Cys-128 and Cys-217 are joined by a disulfide bond. A helical transmembrane segment spans residues 229–249 (YSFSGAFLFSMGFLVAVLCYL). Over 250-574 (SYRYVTKPPA…GLALTVQWES (325 aa)) the chain is Cytoplasmic. Disordered regions lie at residues 388–440 (SSYA…AGSC), 454–489 (AMEE…EGTP), and 507–560 (HPMS…TELD). A phosphoserine mark is found at Ser-410 and Ser-414.

It belongs to the type II cytokine receptor family. Heterodimer with IL10RB and with IL20RB. IL22 binding to heterodimer is greater than binding to IL22RA1 alone. Interacts with FBXW12; the interaction promotes ubiquitination of IL22RA1. In terms of processing, ubiquitinated. As to expression, expressed in colon, liver, lung, pancreas and kidney. No expression in immune cells such as monocytes, T-cells, and NK-cells. Expressed in keratinocytes of normal skin as well as in psoriatic skin lesion. Detected in normal blood brain barrier endothelial cells as well as in multiple sclerosis lesions; Strongly expressed on central nervous system vessels within infiltrated multiple sclerosis lesions. Overexpressed in synovial fluid cells from rheumatoid arthritis and spondyloarthropathy patients.

Its subcellular location is the cell membrane. In terms of biological role, component of the receptor for IL20, IL22 and IL24. Component of IL22 receptor formed by IL22RA1 and IL10RB enabling IL22 signaling via JAK/STAT pathways. IL22 also induces activation of MAPK1/MAPK3 and Akt kinases pathways. Component of one of the receptor for IL20 and IL24 formed by IL22RA1 and IL20RB also signaling through STATs activation. Mediates IL24 antiangiogenic activity as well as IL24 inhibitory effect on endothelial cell tube formation and differentiation. The sequence is that of Interleukin-22 receptor subunit alpha-1 (IL22RA1) from Homo sapiens (Human).